A 117-amino-acid polypeptide reads, in one-letter code: Toxin CSTX-12 (117 aa).

An N-terminal signal peptide occupies residues 1 to 20 (MKVLVICAVLFLTIFSNSSA). Positions 21–47 (ETEDDFLEDESFEADDVIPFLAREQVR) are excised as a propeptide. 4 disulfide bridges follow: Cys50–Cys65, Cys57–Cys74, Cys64–Cys95, and Cys76–Cys93. The propeptide occupies 82–87 (RSDTAR). Ala116 is modified (alanine amide).

Belongs to the neurotoxin 19 (CSTX) family. 12 subfamily. Heterodimer of A and B chains; disulfide-linked. Interacts with CSTX-1 (AC P81694), and with CSTX-9 (AC P58604). In terms of tissue distribution, expressed by the venom gland.

It is found in the secreted. Its subcellular location is the target cell membrane. Its function is as follows. Synergistic toxin that induces or increases a cytolytic effect when combined with CSTX-1 (AC P81694) or CSTX-9 (AC P58604). When alone, has a weak insecticidal activity, with an unknown molecular target. This chain is Toxin CSTX-12, found in Cupiennius salei (American wandering spider).